The following is a 73-amino-acid chain: Small ribosomal subunit protein bS18c (73 aa).

It belongs to the bacterial ribosomal protein bS18 family. As to quaternary structure, part of the 30S ribosomal subunit.

It localises to the plastid. It is found in the chloroplast. This Rhodomonas salina (Cryptomonas salina) protein is Small ribosomal subunit protein bS18c.